We begin with the raw amino-acid sequence, 192 residues long: GTP cyclohydrolase 1 (192 aa).

Zn(2+) contacts are provided by Cys-82, His-85, and Cys-153.

It belongs to the GTP cyclohydrolase I family. As to quaternary structure, toroid-shaped homodecamer, composed of two pentamers of five dimers.

It catalyses the reaction GTP + H2O = 7,8-dihydroneopterin 3'-triphosphate + formate + H(+). It functions in the pathway cofactor biosynthesis; 7,8-dihydroneopterin triphosphate biosynthesis; 7,8-dihydroneopterin triphosphate from GTP: step 1/1. This is GTP cyclohydrolase 1 from Rickettsia bellii (strain OSU 85-389).